The following is a 307-amino-acid chain: uncharacterized protein (307 aa).

An N-terminal signal peptide occupies residues Met-1–Ser-25. The segment at Glu-60–Ser-90 is disordered. A compositionally biased stretch (low complexity) spans Asn-63 to Asn-82. 2 N-linked (GlcNAc...) asparagine glycosylation sites follow: Asn-124 and Asn-173. Helical transmembrane passes span Ile-244–Ala-264 and Ile-275–Ile-295.

The protein localises to the membrane. This is an uncharacterized protein from Dictyostelium discoideum (Social amoeba).